Here is a 310-residue protein sequence, read N- to C-terminus: uncharacterized protein (310 aa).

Disordered stretches follow at residues 1–53, 78–127, and 153–217; these read MSNK…NKEM, PIEN…TITN, and QQPL…SQML. The span at 11–25 shows a compositional bias: acidic residues; sequence GEEDEEEDDLYDDYD. Polar residues-rich tracts occupy residues 37–49 and 78–88; these read STSM…NISL and PIENINENPSP. Composition is skewed to low complexity over residues 94-126, 164-184, and 192-208; these read QTQQ…TTIT, PSPI…QYIT, and YQPI…QIPT. Residues 268–299 are a coiled coil; sequence DLIKSVQHNIRQYNDDILTLEEKLEQTEWSLQ.

This is an uncharacterized protein from Dictyostelium discoideum (Social amoeba).